Reading from the N-terminus, the 659-residue chain is Mannosyl-oligosaccharide 1,2-alpha-mannosidase IA (659 aa).

At 1–48 (MPVGGLLPLFSSPAGGGLGGGLGGGLGGGGGGGGRKGSGPSAFRLTEK) the chain is on the cytoplasmic side. A helical; Signal-anchor for type II membrane protein membrane pass occupies residues 49-69 (FVLLLVFSAFITLCFGAIFFL). The Lumenal segment spans residues 70–659 (PDSSKLLSGV…NIKKVEDNEK (590 aa)). The segment at 88 to 121 (QPAADHKPGPGARAEDAADGRARPGEEGAPGDPA) is disordered. Over residues 91–113 (ADHKPGPGARAEDAADGRARPGE) the composition is skewed to basic and acidic residues. Cys-482 and Cys-514 form a disulfide bridge. Residue Glu-528 is the Proton donor of the active site. Thr-639 provides a ligand contact to Ca(2+).

This sequence belongs to the glycosyl hydrolase 47 family. It depends on Ca(2+) as a cofactor.

The protein resides in the endoplasmic reticulum membrane. The enzyme catalyses N(4)-(alpha-D-Man-(1-&gt;2)-alpha-D-Man-(1-&gt;2)-alpha-D-Man-(1-&gt;3)-[alpha-D-Man-(1-&gt;2)-alpha-D-Man-(1-&gt;3)-[alpha-D-Man-(1-&gt;2)-alpha-D-Man-(1-&gt;6)]-alpha-D-Man-(1-&gt;6)]-beta-D-Man-(1-&gt;4)-beta-D-GlcNAc-(1-&gt;4)-beta-D-GlcNAc)-L-asparaginyl-[protein] (N-glucan mannose isomer 9A1,2,3B1,2,3) + 4 H2O = N(4)-(alpha-D-Man-(1-&gt;3)-[alpha-D-Man-(1-&gt;3)-[alpha-D-Man-(1-&gt;6)]-alpha-D-Man-(1-&gt;6)]-beta-D-Man-(1-&gt;4)-beta-D-GlcNAc-(1-&gt;4)-beta-D-GlcNAc)-L-asparaginyl-[protein] (N-glucan mannose isomer 5A1,2) + 4 beta-D-mannose. It carries out the reaction N(4)-(alpha-D-Man-(1-&gt;2)-alpha-D-Man-(1-&gt;2)-alpha-D-Man-(1-&gt;3)-[alpha-D-Man-(1-&gt;3)-[alpha-D-Man-(1-&gt;2)-alpha-D-Man-(1-&gt;6)]-alpha-D-Man-(1-&gt;6)]-beta-D-Man-(1-&gt;4)-beta-D-GlcNAc-(1-&gt;4)-beta-D-GlcNAc)-L-asparaginyl-[protein] (N-glucan mannose isomer 8A1,2,3B1,3) + 3 H2O = N(4)-(alpha-D-Man-(1-&gt;3)-[alpha-D-Man-(1-&gt;3)-[alpha-D-Man-(1-&gt;6)]-alpha-D-Man-(1-&gt;6)]-beta-D-Man-(1-&gt;4)-beta-D-GlcNAc-(1-&gt;4)-beta-D-GlcNAc)-L-asparaginyl-[protein] (N-glucan mannose isomer 5A1,2) + 3 beta-D-mannose. The protein operates within protein modification; protein glycosylation. Its activity is regulated as follows. Inhibited by both 1-deoxymannojirimycin and kifunensine. Its function is as follows. Involved in the maturation of Asn-linked oligosaccharides. Progressively trim alpha-1,2-linked mannose residues from Man(9)GlcNAc(2) to produce Man(5)GlcNAc(2). In Sus scrofa (Pig), this protein is Mannosyl-oligosaccharide 1,2-alpha-mannosidase IA (MAN1A1).